A 271-amino-acid polypeptide reads, in one-letter code: Phosphatidylglycerol--prolipoprotein diacylglyceryl transferase (271 aa).

A run of 4 helical transmembrane segments spans residues 18–38 (LSVH…LWMA), 51–71 (IFID…RAYY), 89–109 (IWKG…TGIV), and 115–135 (GISF…GQAI). An a 1,2-diacyl-sn-glycero-3-phospho-(1'-sn-glycerol)-binding site is contributed by Arg-137. 3 helical membrane passes run 177–197 (HPTF…LLLL), 205–225 (GNLF…IEGM), and 236–256 (LRIA…LMIF).

The protein belongs to the Lgt family.

Its subcellular location is the cell membrane. The catalysed reaction is L-cysteinyl-[prolipoprotein] + a 1,2-diacyl-sn-glycero-3-phospho-(1'-sn-glycerol) = an S-1,2-diacyl-sn-glyceryl-L-cysteinyl-[prolipoprotein] + sn-glycerol 1-phosphate + H(+). Its pathway is protein modification; lipoprotein biosynthesis (diacylglyceryl transfer). In terms of biological role, catalyzes the transfer of the diacylglyceryl group from phosphatidylglycerol to the sulfhydryl group of the N-terminal cysteine of a prolipoprotein, the first step in the formation of mature lipoproteins. The sequence is that of Phosphatidylglycerol--prolipoprotein diacylglyceryl transferase from Bacillus velezensis (strain DSM 23117 / BGSC 10A6 / LMG 26770 / FZB42) (Bacillus amyloliquefaciens subsp. plantarum).